Here is a 332-residue protein sequence, read N- to C-terminus: Glycerol-3-phosphate dehydrogenase [NAD(P)+] (332 aa).

NADPH is bound by residues tryptophan 11, arginine 30, and lysine 108. Residues lysine 108, glycine 137, and serine 139 each contribute to the sn-glycerol 3-phosphate site. Residue alanine 141 coordinates NADPH. The sn-glycerol 3-phosphate site is built by lysine 192, aspartate 245, serine 255, arginine 256, and asparagine 257. The Proton acceptor role is filled by lysine 192. Position 256 (arginine 256) interacts with NADPH. NADPH is bound by residues valine 280 and glutamate 282.

The protein belongs to the NAD-dependent glycerol-3-phosphate dehydrogenase family.

The protein resides in the cytoplasm. It catalyses the reaction sn-glycerol 3-phosphate + NAD(+) = dihydroxyacetone phosphate + NADH + H(+). The catalysed reaction is sn-glycerol 3-phosphate + NADP(+) = dihydroxyacetone phosphate + NADPH + H(+). It participates in membrane lipid metabolism; glycerophospholipid metabolism. Functionally, catalyzes the reduction of the glycolytic intermediate dihydroxyacetone phosphate (DHAP) to sn-glycerol 3-phosphate (G3P), the key precursor for phospholipid synthesis. This is Glycerol-3-phosphate dehydrogenase [NAD(P)+] from Burkholderia vietnamiensis (strain G4 / LMG 22486) (Burkholderia cepacia (strain R1808)).